We begin with the raw amino-acid sequence, 587 residues long: Aspartate--tRNA ligase (587 aa).

Residue Glu174 coordinates L-aspartate. Residues 198 to 201 (QITK) are aspartate. Residue Arg220 participates in L-aspartate binding. Residues 220 to 222 (RDE) and Gln229 contribute to the ATP site. Position 443 (His443) interacts with L-aspartate. Position 477 (Glu477) interacts with ATP. Residue Arg484 participates in L-aspartate binding. Position 529–532 (529–532 (GLDR)) interacts with ATP.

The protein belongs to the class-II aminoacyl-tRNA synthetase family. Type 1 subfamily. As to quaternary structure, homodimer.

The protein localises to the cytoplasm. The enzyme catalyses tRNA(Asp) + L-aspartate + ATP = L-aspartyl-tRNA(Asp) + AMP + diphosphate. Functionally, catalyzes the attachment of L-aspartate to tRNA(Asp) in a two-step reaction: L-aspartate is first activated by ATP to form Asp-AMP and then transferred to the acceptor end of tRNA(Asp). This is Aspartate--tRNA ligase from Streptococcus pneumoniae serotype 4 (strain ATCC BAA-334 / TIGR4).